A 382-amino-acid chain; its full sequence is Gap junction alpha-1 protein (382 aa).

Over 2–23 (GDWSALGKLLDKVQAYSTAGGK) the chain is Cytoplasmic. Ser-5 is subject to Phosphoserine. A helical membrane pass occupies residues 24 to 44 (VWLSVLFIFRILLLGTAVESA). The Extracellular segment spans residues 45-76 (WGDEQSAFRCNTQQPGCENVCYDKSFPISHVR). 2 cysteine pairs are disulfide-bonded: Cys-54–Cys-192 and Cys-187–Cys-198. The chain crosses the membrane as a helical span at residues 77–97 (FWVLQIIFVSVPTLLYLAHVF). Over 98-155 (YVMRKEEKLNKKEEELKVAQTDGVNVEMHLKQIEIKKFKYGIEEHGKVKMRGGLLRTY) the chain is Cytoplasmic. Lys-144 participates in a covalent cross-link: Glycyl lysine isopeptide (Lys-Gly) (interchain with G-Cter in SUMO). The helical transmembrane segment at 156–176 (IISILFKSIFEVAFLLIQWYI) threads the bilayer. Residues 177 to 207 (YGFSLSAVYTCKRDPCPHQVDCFLSRPTEKT) lie on the Extracellular side of the membrane. Residues 208–228 (IFIIFMLVVSLVSLALNIIEL) traverse the membrane as a helical segment. At 229 to 382 (FYVFFKGVKD…SRPRPDDLEI (154 aa)) the chain is on the cytoplasmic side. A Glycyl lysine isopeptide (Lys-Gly) (interchain with G-Cter in SUMO) cross-link involves residue Lys-237. An interaction with NOV region spans residues 244–382 (SDPYHATSGA…SRPRPDDLEI (139 aa)). At Tyr-247 the chain carries Phosphotyrosine. A phosphoserine mark is found at Ser-255 and Ser-262. The interaction with UBQLN4 stretch occupies residues 264–382 (KYAYFNGCSS…SRPRPDDLEI (119 aa)). Cys-271 bears the S-nitrosocysteine mark. The residue at position 275 (Thr-275) is a Phosphothreonine. The interval 279-300 (SPMSPPGYKPVTGDRNNSSCRN) is disordered. Residues Ser-306 and Ser-314 each carry the phosphoserine modification. A compositionally biased stretch (polar residues) spans 317 to 332 (QNRMGQAGSTISNSHA). The disordered stretch occupies residues 317 to 382 (QNRMGQAGST…SRPRPDDLEI (66 aa)). Ser-325 carries the phosphoserine; by CK1 modification. Thr-326 is subject to Phosphothreonine. 2 positions are modified to phosphoserine; by CK1: Ser-328 and Ser-330. Residues Ser-344 and Ser-365 each carry the phosphoserine modification. The span at 362 to 374 (RPSSRASSRASSR) shows a compositional bias: low complexity. The residue at position 368 (Ser-368) is a Phosphoserine; by PKC/PRKCG and PKC/PRKCD. 2 positions are modified to phosphoserine: Ser-369 and Ser-373.

The protein belongs to the connexin family. Alpha-type (group II) subfamily. As to quaternary structure, a connexon is composed of a hexamer of connexins. Interacts with SGSM3. Interacts with RIC1/CIP150. Interacts with CNST and CSNK1D. Interacts (via C-terminus) with TJP1. Interacts (via C-terminus) with SRC (via SH3 domain). Interacts (not ubiquitinated) with UBQLN4 (via UBA domain). Interacts with NOV. Interacts with TMEM65. Interacts with ANK3/ANKG and PKP2. In terms of processing, phosphorylation at Ser-325, Ser-328 and Ser-330 by CK1 modulates gap junction assembly. Phosphorylated at Ser-368 by PRKCG; phosphorylation induces disassembly of gap junction plaques and inhibition of gap junction activity. Phosphorylation at Ser-368 by PRKCD triggers its internalization into small vesicles leading to proteasome-mediated degradation. Sumoylated with SUMO1, SUMO2 and SUMO3, which may regulate the level of functional Cx43 gap junctions at the plasma membrane. May be desumoylated by SENP1 or SENP2. Post-translationally, S-nitrosylation at Cys-271 is enriched at the muscle endothelial gap junction in arteries, it augments channel permeability and may regulate of smooth muscle cell to endothelial cell communication. In terms of processing, acetylated in the developing cortex; leading to delocalization from the cell membrane.

It is found in the cell membrane. The protein resides in the cell junction. It localises to the gap junction. The protein localises to the endoplasmic reticulum. Functionally, gap junction protein that acts as a regulator of bladder capacity. A gap junction consists of a cluster of closely packed pairs of transmembrane channels, the connexons, through which materials of low MW diffuse from one cell to a neighboring cell. May play a critical role in the physiology of hearing by participating in the recycling of potassium to the cochlear endolymph. Negative regulator of bladder functional capacity: acts by enhancing intercellular electrical and chemical transmission, thus sensitizing bladder muscles to cholinergic neural stimuli and causing them to contract. May play a role in cell growth inhibition through the regulation of NOV expression and localization. Plays an essential role in gap junction communication in the ventricles. The protein is Gap junction alpha-1 protein (GJA1) of Macaca fascicularis (Crab-eating macaque).